We begin with the raw amino-acid sequence, 136 residues long: Blasticidin-S acetyltransferase (136 aa).

The N-acetyltransferase domain maps to 1–136; it reads MLSLPRLQTV…ITSHLLVKEL (136 aa).

Functionally, confers resistance to blasticidin S antibiotic. The protein is Blasticidin-S acetyltransferase (bls) of Streptomyces morookaense (Streptoverticillium morookaense).